Consider the following 251-residue polypeptide: Probable phosphatase Sputcn32_1369 (251 aa).

Positions 8, 10, 16, 41, 74, 102, 132, 193, and 195 each coordinate Zn(2+).

The protein belongs to the PHP family. Zn(2+) is required as a cofactor.

This is Probable phosphatase Sputcn32_1369 from Shewanella putrefaciens (strain CN-32 / ATCC BAA-453).